A 410-amino-acid polypeptide reads, in one-letter code: Arginine deiminase (410 aa).

The active-site Amidino-cysteine intermediate is the C400.

This sequence belongs to the arginine deiminase family.

Its subcellular location is the cytoplasm. It catalyses the reaction L-arginine + H2O = L-citrulline + NH4(+). Its pathway is amino-acid degradation; L-arginine degradation via ADI pathway; carbamoyl phosphate from L-arginine: step 1/2. The polypeptide is Arginine deiminase (Lactococcus lactis subsp. cremoris (strain MG1363)).